The following is a 367-amino-acid chain: Phospho-N-acetylmuramoyl-pentapeptide-transferase (367 aa).

The next 10 membrane-spanning stretches (helical) occupy residues 16–36, 62–82, 87–107, 125–145, 158–178, 190–210, 214–234, 240–260, 264–284, and 326–346; these read LLLA…WVHF, TMGG…FNLV, MLLP…DDWL, FWIM…PQPY, VGEV…IVFI, SLAG…TFLA, LTNL…FLWY, QVFM…VVAL, QWIL…STLI, and FVLI…IFGS.

The protein belongs to the glycosyltransferase 4 family. MraY subfamily. Mg(2+) is required as a cofactor.

It localises to the cell membrane. It catalyses the reaction UDP-N-acetyl-alpha-D-muramoyl-L-alanyl-gamma-D-glutamyl-meso-2,6-diaminopimeloyl-D-alanyl-D-alanine + di-trans,octa-cis-undecaprenyl phosphate = di-trans,octa-cis-undecaprenyl diphospho-N-acetyl-alpha-D-muramoyl-L-alanyl-D-glutamyl-meso-2,6-diaminopimeloyl-D-alanyl-D-alanine + UMP. The protein operates within cell wall biogenesis; peptidoglycan biosynthesis. Catalyzes the initial step of the lipid cycle reactions in the biosynthesis of the cell wall peptidoglycan: transfers peptidoglycan precursor phospho-MurNAc-pentapeptide from UDP-MurNAc-pentapeptide onto the lipid carrier undecaprenyl phosphate, yielding undecaprenyl-pyrophosphoryl-MurNAc-pentapeptide, known as lipid I. The polypeptide is Phospho-N-acetylmuramoyl-pentapeptide-transferase (Chloroflexus aggregans (strain MD-66 / DSM 9485)).